Reading from the N-terminus, the 883-residue chain is Phosphoenolpyruvate carboxylase (883 aa).

Catalysis depends on residues histidine 138 and lysine 546.

The protein belongs to the PEPCase type 1 family. Requires Mg(2+) as cofactor.

The catalysed reaction is oxaloacetate + phosphate = phosphoenolpyruvate + hydrogencarbonate. Its function is as follows. Forms oxaloacetate, a four-carbon dicarboxylic acid source for the tricarboxylic acid cycle. The polypeptide is Phosphoenolpyruvate carboxylase (Enterobacter sp. (strain 638)).